The sequence spans 722 residues: Polyribonucleotide nucleotidyltransferase (722 aa).

Mg(2+) contacts are provided by aspartate 487 and aspartate 493. The region spanning 554–613 (PRIETFKIPTDKIREVIGTGGKVIREIVEKTGAKVNIEDDGTVKVASSDGESIKAAIKWI) is the KH domain. Residues 623–691 (GEIYEGTVVK…DRGKTRLSMK (69 aa)) enclose the S1 motif domain. Residues 697–722 (TGEDLEAKQKAEAKAEGEAPAQAAGE) form a disordered region. The span at 701-713 (LEAKQKAEAKAEG) shows a compositional bias: basic and acidic residues.

The protein belongs to the polyribonucleotide nucleotidyltransferase family. The cofactor is Mg(2+).

The protein localises to the cytoplasm. It catalyses the reaction RNA(n+1) + phosphate = RNA(n) + a ribonucleoside 5'-diphosphate. Involved in mRNA degradation. Catalyzes the phosphorolysis of single-stranded polyribonucleotides processively in the 3'- to 5'-direction. This Rhodopseudomonas palustris (strain ATCC BAA-98 / CGA009) protein is Polyribonucleotide nucleotidyltransferase.